The following is a 467-amino-acid chain: Argininosuccinate lyase (467 aa).

The protein belongs to the lyase 1 family. Argininosuccinate lyase subfamily.

It is found in the cytoplasm. It catalyses the reaction 2-(N(omega)-L-arginino)succinate = fumarate + L-arginine. Its pathway is amino-acid biosynthesis; L-arginine biosynthesis; L-arginine from L-ornithine and carbamoyl phosphate: step 3/3. This chain is Argininosuccinate lyase, found in Sinorhizobium fredii (strain NBRC 101917 / NGR234).